The sequence spans 257 residues: Ribonuclease HII (257 aa).

Positions 71-257 (ELIAGIDEVG…EPIKSMVNFK (187 aa)) constitute an RNase H type-2 domain. D77, E78, and D169 together coordinate a divalent metal cation.

It belongs to the RNase HII family. It depends on Mn(2+) as a cofactor. Requires Mg(2+) as cofactor.

Its subcellular location is the cytoplasm. The enzyme catalyses Endonucleolytic cleavage to 5'-phosphomonoester.. In terms of biological role, endonuclease that specifically degrades the RNA of RNA-DNA hybrids. The chain is Ribonuclease HII (rnhB) from Lactococcus lactis subsp. cremoris (strain MG1363).